A 310-amino-acid chain; its full sequence is Protein DOS2 (310 aa).

Composition is skewed to basic and acidic residues over residues 15–26 and 135–146; these read DKISNSHTKETG and SNDKDENSKENE. Disordered stretches follow at residues 15 to 45 and 131 to 151; these read DKISNSHTKETGSTENTENNELQSRDDKTNE and AENDSNDKDENSKENEIAVGG. The BSD domain occupies 176–228; that stretch reads QLDPFDVDEKTEEICSILQGDKDISKLMNDIVPHKISYKDFWHIYFLQRNKIL. The segment at 240–310 is disordered; it reads KKEKETEEKE…KDDDDDDDWE (71 aa). A compositionally biased stretch (acidic residues) spans 247–263; it reads EKEVEWDDEEEEEDDDK. 2 stretches are compositionally biased toward basic and acidic residues: residues 264 to 276 and 284 to 300; these read VEAVADNKSKGET and GLKDVSDHVGLANKDES. Over residues 301-310 the composition is skewed to acidic residues; the sequence is KDDDDDDDWE.

Its function is as follows. Acts in ubiquitin metabolism and is necessary for the control of single-copy DNA replication. This Saccharomyces cerevisiae (strain ATCC 204508 / S288c) (Baker's yeast) protein is Protein DOS2 (DOS2).